The chain runs to 97 residues: uncharacterized protein (97 aa).

In terms of biological role, may have a regulatory function. This is an uncharacterized protein from Synechocystis sp. (strain ATCC 27184 / PCC 6803 / Kazusa).